The chain runs to 225 residues: Protein-L-isoaspartate O-methyltransferase (225 aa).

Ser63 is an active-site residue.

This sequence belongs to the methyltransferase superfamily. L-isoaspartyl/D-aspartyl protein methyltransferase family.

The protein localises to the cytoplasm. The catalysed reaction is [protein]-L-isoaspartate + S-adenosyl-L-methionine = [protein]-L-isoaspartate alpha-methyl ester + S-adenosyl-L-homocysteine. Catalyzes the methyl esterification of L-isoaspartyl residues in peptides and proteins that result from spontaneous decomposition of normal L-aspartyl and L-asparaginyl residues. It plays a role in the repair and/or degradation of damaged proteins. The chain is Protein-L-isoaspartate O-methyltransferase from Staphylothermus marinus (strain ATCC 43588 / DSM 3639 / JCM 9404 / F1).